A 556-amino-acid chain; its full sequence is Hydroxylamine reductase (556 aa).

4 residues coordinate [4Fe-4S] cluster: Cys5, Cys8, Cys17, and Cys23. Hybrid [4Fe-2O-2S] cluster-binding residues include His249, Glu273, Cys317, Cys409, Cys437, Cys462, Glu497, and Lys499. Cys409 carries the cysteine persulfide modification.

This sequence belongs to the HCP family. [4Fe-4S] cluster is required as a cofactor. Requires hybrid [4Fe-2O-2S] cluster as cofactor.

The protein localises to the cytoplasm. The catalysed reaction is A + NH4(+) + H2O = hydroxylamine + AH2 + H(+). Catalyzes the reduction of hydroxylamine to form NH(3) and H(2)O. This Kosmotoga olearia (strain ATCC BAA-1733 / DSM 21960 / TBF 19.5.1) protein is Hydroxylamine reductase.